A 199-amino-acid polypeptide reads, in one-letter code: MEWKYVIPGIPDNFFERDEEIPMTKEEIRALALSKLRIRKGDMILDIGCGTGSVTVEASLLVGSTGKVYGVDKEEKAINLTRRNAEKFGVLNNIVLIKGEAPEILFTINEKFDRIFIGGGSEKIKEIISASWEIIKKGGRVVIDAILLETVNNAISAMENIGFMNLEITEVIIAKGMKTKVGTAMMTRNPIFIISGEKQ.

S-adenosyl-L-methionine-binding positions include threonine 24, 48 to 52, aspartate 72, and alanine 101; that span reads GCGTG.

This sequence belongs to the methyltransferase superfamily. Archaeal-type CbiT family.

The catalysed reaction is Co-precorrin-6B + S-adenosyl-L-methionine = Co-precorrin-7 + S-adenosyl-L-homocysteine + CO2. The protein operates within cofactor biosynthesis; adenosylcobalamin biosynthesis; cob(II)yrinate a,c-diamide from sirohydrochlorin (anaerobic route): step 8/10. Functionally, catalyzes the methylation of C-15 in cobalt-precorrin-6B followed by the decarboxylation of C-12 to form cobalt-precorrin-7. The protein is Probable cobalt-precorrin-6B C(15)-methyltransferase (decarboxylating) of Saccharolobus islandicus (strain L.S.2.15 / Lassen #1) (Sulfolobus islandicus).